A 302-amino-acid polypeptide reads, in one-letter code: Probable 2-(5''-triphosphoribosyl)-3'-dephosphocoenzyme-A synthase 1 (302 aa).

Belongs to the CitG/MdcB family.

The catalysed reaction is 3'-dephospho-CoA + ATP = 2'-(5''-triphospho-alpha-D-ribosyl)-3'-dephospho-CoA + adenine. The sequence is that of Probable 2-(5''-triphosphoribosyl)-3'-dephosphocoenzyme-A synthase 1 from Salmonella typhimurium (strain LT2 / SGSC1412 / ATCC 700720).